Reading from the N-terminus, the 463-residue chain is Paraneoplastic antigen Ma3 (463 aa).

The segment at 363–410 (VGAVPLPASGNSFDARPSQGYRRRRGRGQHRRGGVARAGSRGSRKRKR) is disordered. Residues 383-396 (YRRRRGRGQHRRGG) are compositionally biased toward basic residues. The segment at 412–429 (TFCYSCGEDGHIRVQCIN) adopts a CCHC-type zinc-finger fold. The disordered stretch occupies residues 440–463 (KQAAVESGNGNWAWDKSHPKSKAK).

Belongs to the PNMA family. As to expression, expressed at high levels in the brain and testis. Expressed at lower levels in the heart, trachea and kidney.

The protein resides in the nucleus. The protein localises to the nucleolus. In Homo sapiens (Human), this protein is Paraneoplastic antigen Ma3 (PNMA3).